Consider the following 105-residue polypeptide: MAAKIKKGDKVVVLAGRDKGRSGEVLQVLPKEDRALVRGINLVKRHQRQTAKQEAGIYTKEATIHLSNLALADPKDGKATRVGFKILEDGRKVRFAKHSGDVIDG.

Belongs to the universal ribosomal protein uL24 family. Part of the 50S ribosomal subunit.

Functionally, one of two assembly initiator proteins, it binds directly to the 5'-end of the 23S rRNA, where it nucleates assembly of the 50S subunit. In terms of biological role, one of the proteins that surrounds the polypeptide exit tunnel on the outside of the subunit. This is Large ribosomal subunit protein uL24 from Beijerinckia indica subsp. indica (strain ATCC 9039 / DSM 1715 / NCIMB 8712).